A 453-amino-acid chain; its full sequence is UDP-N-acetylmuramate--L-alanine ligase (453 aa).

Residue 112 to 118 (GTHGKTT) participates in ATP binding.

Belongs to the MurCDEF family.

The protein resides in the cytoplasm. It carries out the reaction UDP-N-acetyl-alpha-D-muramate + L-alanine + ATP = UDP-N-acetyl-alpha-D-muramoyl-L-alanine + ADP + phosphate + H(+). Its pathway is cell wall biogenesis; peptidoglycan biosynthesis. In terms of biological role, cell wall formation. The chain is UDP-N-acetylmuramate--L-alanine ligase from Lawsonia intracellularis (strain PHE/MN1-00).